Reading from the N-terminus, the 979-residue chain is UPF0182 protein BCG_0095 (979 aa).

The next 7 helical transmembrane spans lie at 19-39 (LVTA…LVDI), 63-83 (LAIV…ALLL), 114-134 (LFGW…ASFD), 174-194 (WLFV…YLFG), 211-231 (VQLA…YWLD), 260-280 (KLVL…AIFL), and 288-308 (MAAA…PLLM). Residues 898 to 948 (GTGRVATAPGGDAASAPPPGAGGPAPPQAVPPPRTTQPPAAPPRGPDVPPA) form a disordered region. A compositionally biased stretch (low complexity) spans 902-912 (VATAPGGDAAS). Residues 913 to 946 (APPPGAGGPAPPQAVPPPRTTQPPAAPPRGPDVP) show a composition bias toward pro residues.

The protein belongs to the UPF0182 family.

Its subcellular location is the cell membrane. The chain is UPF0182 protein BCG_0095 from Mycobacterium bovis (strain BCG / Pasteur 1173P2).